A 159-amino-acid chain; its full sequence is UPF0262 protein Dshi_0980 (159 aa).

The protein belongs to the UPF0262 family.

The sequence is that of UPF0262 protein Dshi_0980 from Dinoroseobacter shibae (strain DSM 16493 / NCIMB 14021 / DFL 12).